Reading from the N-terminus, the 190-residue chain is Elongation factor P-like protein (190 aa).

Belongs to the elongation factor P family.

The chain is Elongation factor P-like protein from Yersinia pestis bv. Antiqua (strain Antiqua).